The primary structure comprises 454 residues: UDP-N-acetylmuramate--L-alanine ligase (454 aa).

113–119 (GSHGKTT) serves as a coordination point for ATP.

It belongs to the MurCDEF family.

Its subcellular location is the cytoplasm. It carries out the reaction UDP-N-acetyl-alpha-D-muramate + L-alanine + ATP = UDP-N-acetyl-alpha-D-muramoyl-L-alanine + ADP + phosphate + H(+). It participates in cell wall biogenesis; peptidoglycan biosynthesis. Its function is as follows. Cell wall formation. This Aquifex aeolicus (strain VF5) protein is UDP-N-acetylmuramate--L-alanine ligase.